Reading from the N-terminus, the 803-residue chain is MASTIMSQEVSWTDILEKHPALRWIKPIPEDWEIFPKHLCAFESFLYVAVGQEVRSLDCRLLKHKNEASHKNFYKKLFNPELDFMIEQICLSKNGRFLAVVGKSKIVILGLRSKLSEQNPLAESVSNFGESVNNFSNSEHQENGTNSLKLSEVTICSVAVINPSSQIVSVRFHPLGKSGRSLVVLTETSLLLYEAGNGVLMPDYEIPLKLTHQASNSFDADVDLHIPTAFCFSNVSQGWGVFTIYILTRGGDVFSVCPVMPANAMIPQDVLKQIRLILTKKEDDADAENHRRNVHWITKLLGEAALANDLSTSFVISEGSSELFDSSDYVSVRRPDDFSFIPSMQGPFLLQPAVADDELIEDYCDIYSFGMNPIDVLAIGGSEGRLDLLLLVSEVSGRWSKLNDHGLASMKLIVSQVHSLYLSNNNPYMVLQPDIQSPYSLIAYHANGLHVVDIESWARDLNLNFENSEFLNNEEENDEDELSNVLVSIPSRTSVLERLDTNPLNESTDAVVGCAQLYYPSLGKILISLTRNWQTTVFDDSDLATMGVNKESLSNEMDYSKSLGTSSLEQVDDLDEKLTYTPLYVSLLEKTPFTDPSIPSLVERTIVPAELQNEITVSSASLRFLGKVVARYRETLNLLDHGCSELHHRLKLQREEYERQQNHIYKLSDRISNFREKAWSTEHLEHLTSDMSMCEKRIDQVLQRVMDLRVPDLSDKEKQFIKEIGNYKEKVTGERGIEKRVETLKTLLQRTKPRDAQTTLVASSSDMRLAAIEQLQKLLAQQSLSIKELKTKTVSFQRLLQTS.

As to quaternary structure, component of the nuclear pore complex (NPC). NPC constitutes the exclusive means of nucleocytoplasmic transport. NPCs allow the passive diffusion of ions and small molecules and the active, nuclear transport receptor-mediated bidirectional transport of macromolecules such as proteins, RNAs, ribonucleoparticles (RNPs), and ribosomal subunits across the nuclear envelope.

Its subcellular location is the nucleus. The protein resides in the nuclear pore complex. It localises to the nucleus membrane. Functionally, functions as a component of the nuclear pore complex (NPC). NPC components, collectively referred to as nucleoporins (NUPs), can play the role of both NPC structural components and of docking or interaction partners for transiently associated nuclear transport factors. The polypeptide is Nucleoporin nup82 (Schizosaccharomyces pombe (strain 972 / ATCC 24843) (Fission yeast)).